Reading from the N-terminus, the 136-residue chain is Histone H3 (136 aa).

The disordered stretch occupies residues 1 to 43 (MARTKQTARKSTGAKAPRKQLASKAARKSAPATGGIKKPHRFR). Residues K5 and K10 each carry the N6,N6,N6-trimethyllysine; alternate modification. K5 bears the N6,N6-dimethyllysine; alternate mark. N6-acetyllysine; alternate is present on residues K5 and K10. The residue at position 5 (K5) is an N6-methyllysine; alternate. S11 is modified (phosphoserine). 3 positions are modified to N6-acetyllysine: K15, K19, and K24. N6,N6,N6-trimethyllysine; alternate is present on residues K28 and K37. An N6,N6-dimethyllysine; alternate mark is found at K28 and K37. N6-acetyllysine; alternate occurs at positions 28, 37, and 57. K28, K37, and K57 each carry N6-methyllysine; alternate. K80 carries the post-translational modification N6-methyllysine.

The protein belongs to the histone H3 family. In terms of assembly, the nucleosome is a histone octamer containing two molecules each of H2A, H2B, H3 and H4 assembled in one H3-H4 heterotetramer and two H2A-H2B heterodimers. The octamer wraps approximately 147 bp of DNA. In terms of processing, phosphorylated to form H3S10ph. H3S10ph promotes subsequent H3K14ac formation by GCN5. H3S10ph is only found in the mitotically dividing MIC, but not in the amitotically dividing MAC. H3S10ph is correlated with chromosome condensation during mitotic or meiotic micronuclear divisions. Acetylation of histone H3 leads to transcriptional activation. H3K14ac formation by GCN5 is promoted by H3S10ph. H3K9acK14ac is the preferred acetylated form of newly synthesized H3. Acetylation occurs almost exclusively in the MAC. Post-translationally, methylated to form H3K4me. H3K4me is only found in the transcriptionally active MAC. Methylated to form H3K9me in developing MACs during conjugation, when genome-wide DNA elimination occurs. At this stage, H3K9me specifically occurs on DNA sequences being eliminated (IES), probably targeted by small scan RNAs (scnRNAs) bound to IES, and is required for efficient IES elimination. H3K9me is required for the interaction with the chromodomains of PDD1 and PDD3. In terms of processing, the full-length protein H3S (slow migrating) is converted to H3F (fast migrating) by proteolytic removal of the first 6 residues. H3F is unique to MIC, and processing seems to occur regularly each generation at a specific point in the cell cycle.

Its subcellular location is the nucleus. The protein resides in the chromosome. Its function is as follows. Core component of nucleosome. Nucleosomes wrap and compact DNA into chromatin, limiting DNA accessibility to the cellular machineries which require DNA as a template. Histones thereby play a central role in transcription regulation, DNA repair, DNA replication and chromosomal stability. DNA accessibility is regulated via a complex set of post-translational modifications of histones, also called histone code, and nucleosome remodeling. This chain is Histone H3, found in Tetrahymena pyriformis.